A 569-amino-acid polypeptide reads, in one-letter code: Urease subunit alpha (569 aa).

Residues 131 to 569 (GGIDTHIHFI…LPLAQRYLLL (439 aa)) form the Urease domain. Ni(2+) contacts are provided by His-136, His-138, and Lys-219. At Lys-219 the chain carries N6-carboxylysine. His-221 serves as a coordination point for substrate. 2 residues coordinate Ni(2+): His-248 and His-274. The active-site Proton donor is the His-322. Ni(2+) is bound at residue Asp-362.

Belongs to the metallo-dependent hydrolases superfamily. Urease alpha subunit family. Heterotrimer of UreA (gamma), UreB (beta) and UreC (alpha) subunits. Three heterotrimers associate to form the active enzyme. Ni cation serves as cofactor. Post-translationally, carboxylation allows a single lysine to coordinate two nickel ions.

It is found in the cytoplasm. It catalyses the reaction urea + 2 H2O + H(+) = hydrogencarbonate + 2 NH4(+). Its pathway is nitrogen metabolism; urea degradation; CO(2) and NH(3) from urea (urease route): step 1/1. This is Urease subunit alpha from Synechococcus sp. (strain CC9311).